Reading from the N-terminus, the 509-residue chain is Maturase K (509 aa).

This sequence belongs to the intron maturase 2 family. MatK subfamily.

Its subcellular location is the plastid. The protein localises to the chloroplast. Usually encoded in the trnK tRNA gene intron. Probably assists in splicing its own and other chloroplast group II introns. The chain is Maturase K from Cicer arietinum (Chickpea).